Reading from the N-terminus, the 406-residue chain is Succinylornithine transaminase (406 aa).

An N6-(pyridoxal phosphate)lysine modification is found at Lys-252.

It belongs to the class-III pyridoxal-phosphate-dependent aminotransferase family. AstC subfamily. It depends on pyridoxal 5'-phosphate as a cofactor.

It catalyses the reaction N(2)-succinyl-L-ornithine + 2-oxoglutarate = N-succinyl-L-glutamate 5-semialdehyde + L-glutamate. It participates in amino-acid degradation; L-arginine degradation via AST pathway; L-glutamate and succinate from L-arginine: step 3/5. Functionally, catalyzes the transamination of N(2)-succinylornithine and alpha-ketoglutarate into N(2)-succinylglutamate semialdehyde and glutamate. Can also act as an acetylornithine aminotransferase. The sequence is that of Succinylornithine transaminase from Escherichia coli O17:K52:H18 (strain UMN026 / ExPEC).